Here is a 357-residue protein sequence, read N- to C-terminus: Peptide chain release factor 1 (357 aa).

Gln233 carries the N5-methylglutamine modification. The disordered stretch occupies residues 284-305 (RSASISADRKSQVGTGDRSERI).

Belongs to the prokaryotic/mitochondrial release factor family. Post-translationally, methylated by PrmC. Methylation increases the termination efficiency of RF1.

The protein resides in the cytoplasm. In terms of biological role, peptide chain release factor 1 directs the termination of translation in response to the peptide chain termination codons UAG and UAA. The polypeptide is Peptide chain release factor 1 (Clostridium novyi (strain NT)).